Here is a 497-residue protein sequence, read N- to C-terminus: Bifunctional protein GlmU (497 aa).

The pyrophosphorylase stretch occupies residues 1–252 (MSQPSARPSA…VWEVEGANDR (252 aa)). Residues 14–17 (LAAG), Lys28, Gln86, 91–92 (GT), 115–117 (YGD), Gly154, Glu169, Asn192, and Asn250 each bind UDP-N-acetyl-alpha-D-glucosamine. Asp117 contributes to the Mg(2+) binding site. Asn250 contacts Mg(2+). Residues 253–273 (RQLSDLGRRLNERVLRHWMKE) form a linker region. The segment at 274–497 (GVTVVDPSST…AGAEGSGAQG (224 aa)) is N-acetyltransferase. Arg355 and Lys373 together coordinate UDP-N-acetyl-alpha-D-glucosamine. His385 serves as the catalytic Proton acceptor. The UDP-N-acetyl-alpha-D-glucosamine site is built by Tyr388 and Asn399. Acetyl-CoA is bound by residues 408–409 (NY), Ser427, and Ala445. Residues 473–497 (PAKRPGTSSAEAARAAGAEGSGAQG) are disordered. Residues 480 to 490 (SSAEAARAAGA) are compositionally biased toward low complexity.

This sequence in the N-terminal section; belongs to the N-acetylglucosamine-1-phosphate uridyltransferase family. In the C-terminal section; belongs to the transferase hexapeptide repeat family. In terms of assembly, homotrimer. Mg(2+) is required as a cofactor.

It is found in the cytoplasm. It catalyses the reaction alpha-D-glucosamine 1-phosphate + acetyl-CoA = N-acetyl-alpha-D-glucosamine 1-phosphate + CoA + H(+). The catalysed reaction is N-acetyl-alpha-D-glucosamine 1-phosphate + UTP + H(+) = UDP-N-acetyl-alpha-D-glucosamine + diphosphate. The protein operates within nucleotide-sugar biosynthesis; UDP-N-acetyl-alpha-D-glucosamine biosynthesis; N-acetyl-alpha-D-glucosamine 1-phosphate from alpha-D-glucosamine 6-phosphate (route II): step 2/2. It functions in the pathway nucleotide-sugar biosynthesis; UDP-N-acetyl-alpha-D-glucosamine biosynthesis; UDP-N-acetyl-alpha-D-glucosamine from N-acetyl-alpha-D-glucosamine 1-phosphate: step 1/1. It participates in bacterial outer membrane biogenesis; LPS lipid A biosynthesis. Functionally, catalyzes the last two sequential reactions in the de novo biosynthetic pathway for UDP-N-acetylglucosamine (UDP-GlcNAc). The C-terminal domain catalyzes the transfer of acetyl group from acetyl coenzyme A to glucosamine-1-phosphate (GlcN-1-P) to produce N-acetylglucosamine-1-phosphate (GlcNAc-1-P), which is converted into UDP-GlcNAc by the transfer of uridine 5-monophosphate (from uridine 5-triphosphate), a reaction catalyzed by the N-terminal domain. In Micrococcus luteus (strain ATCC 4698 / DSM 20030 / JCM 1464 / CCM 169 / CCUG 5858 / IAM 1056 / NBRC 3333 / NCIMB 9278 / NCTC 2665 / VKM Ac-2230) (Micrococcus lysodeikticus), this protein is Bifunctional protein GlmU.